The chain runs to 77 residues: Acyl carrier protein (77 aa).

The Carrier domain maps to 1–76 (MSLEDDVKAI…DVIKYIQEHQ (76 aa)). Serine 36 carries the O-(pantetheine 4'-phosphoryl)serine modification.

The protein belongs to the acyl carrier protein (ACP) family. In terms of processing, 4'-phosphopantetheine is transferred from CoA to a specific serine of apo-ACP by AcpS. This modification is essential for activity because fatty acids are bound in thioester linkage to the sulfhydryl of the prosthetic group.

It is found in the cytoplasm. It participates in lipid metabolism; fatty acid biosynthesis. Its function is as follows. Carrier of the growing fatty acid chain in fatty acid biosynthesis. The chain is Acyl carrier protein from Chlamydia trachomatis serovar L2 (strain ATCC VR-902B / DSM 19102 / 434/Bu).